The sequence spans 115 residues: Guanylin (115 aa).

The N-terminal stretch at 1-21 (MNACVLSVLCLLGAVAVLVEG) is a signal peptide. Positions 22-100 (VTVQDGDLSF…LQRLEAIAQD (79 aa)) are excised as a propeptide. Cystine bridges form between Cys69/Cys82, Cys104/Cys112, and Cys107/Cys115.

The protein belongs to the guanylin family.

The protein resides in the secreted. Functionally, endogenous activator of intestinal guanylate cyclase. It stimulates this enzyme through the same receptor binding region as the heat-stable enterotoxins. This Notomys alexis (Spinifex hopping mouse) protein is Guanylin (GUCA2A).